The sequence spans 552 residues: Membrane protein insertase YidC (552 aa).

Residues 3–23 (TKRLILFVIFSFSILMLWDSW) form a helical membrane-spanning segment. The segment at 29-65 (PPAASQTQTTAQSVEDGSVPQAAKSSASAANQASVPA) is disordered. Helical transmembrane passes span 359 to 379 (WGVAIILLTILIKLVFYPLSA), 429 to 449 (LPILVQIPVFIALYWVLLGSV), 463 to 483 (LSAVDPYYVLPILMGITMIIQ), and 503 to 523 (PIVFSVFFFFFPAGLVLYWLV).

This sequence belongs to the OXA1/ALB3/YidC family. Type 1 subfamily. As to quaternary structure, interacts with the Sec translocase complex via SecD. Specifically interacts with transmembrane segments of nascent integral membrane proteins during membrane integration.

The protein localises to the cell inner membrane. In terms of biological role, required for the insertion and/or proper folding and/or complex formation of integral membrane proteins into the membrane. Involved in integration of membrane proteins that insert both dependently and independently of the Sec translocase complex, as well as at least some lipoproteins. Aids folding of multispanning membrane proteins. In Methylobacillus flagellatus (strain ATCC 51484 / DSM 6875 / VKM B-1610 / KT), this protein is Membrane protein insertase YidC.